We begin with the raw amino-acid sequence, 60 residues long: Large ribosomal subunit protein bL32 (60 aa).

Over residues 1-16 the composition is skewed to basic residues; it reads MAVPRNRHSNARKNIR. The disordered stretch occupies residues 1-20; the sequence is MAVPRNRHSNARKNIRRSHD.

It belongs to the bacterial ribosomal protein bL32 family.

This is Large ribosomal subunit protein bL32 (rpmF) from Chlamydia pneumoniae (Chlamydophila pneumoniae).